A 367-amino-acid chain; its full sequence is 2-aminoethylphosphonate--pyruvate transaminase (367 aa).

Lys-194 bears the N6-(pyridoxal phosphate)lysine mark.

It belongs to the class-V pyridoxal-phosphate-dependent aminotransferase family. PhnW subfamily. As to quaternary structure, homodimer. Requires pyridoxal 5'-phosphate as cofactor.

It carries out the reaction (2-aminoethyl)phosphonate + pyruvate = phosphonoacetaldehyde + L-alanine. Its function is as follows. Involved in phosphonate degradation. The sequence is that of 2-aminoethylphosphonate--pyruvate transaminase from Salmonella dublin (strain CT_02021853).